The following is a 145-amino-acid chain: 3-dehydroquinate dehydratase (145 aa).

Tyrosine 23 (proton acceptor) is an active-site residue. Positions 75, 81, and 88 each coordinate substrate. The Proton donor role is filled by histidine 101. Substrate contacts are provided by residues isoleucine 102–serine 103 and arginine 112.

It belongs to the type-II 3-dehydroquinase family. In terms of assembly, homododecamer.

It catalyses the reaction 3-dehydroquinate = 3-dehydroshikimate + H2O. The protein operates within metabolic intermediate biosynthesis; chorismate biosynthesis; chorismate from D-erythrose 4-phosphate and phosphoenolpyruvate: step 3/7. In terms of biological role, catalyzes a trans-dehydration via an enolate intermediate. The protein is 3-dehydroquinate dehydratase of Caldicellulosiruptor saccharolyticus (strain ATCC 43494 / DSM 8903 / Tp8T 6331).